A 428-amino-acid polypeptide reads, in one-letter code: CinA-like protein (428 aa).

The protein belongs to the CinA family.

The chain is CinA-like protein from Mycobacterium leprae (strain TN).